Here is a 977-residue protein sequence, read N- to C-terminus: SLIT and NTRK-like protein 3 (977 aa).

Residues 1–26 form the signal peptide; the sequence is MKPSIAEMLHRGRMLWIILLSTIALG. Topologically, residues 29 to 654 are extracellular; it reads TPIPLIEDSE…SPPGGPVPLS (626 aa). An N-linked (GlcNAc...) asparagine glycan is attached at N68. LRR repeat units follow at residues 78 to 99, 102 to 123, 126 to 147, 150 to 171, 174 to 195, and 197 to 218; these read RPFK…SFLH, NAVS…AFNG, ILKR…TFLG, SLEY…AFRN, KLRV…LFKA, and SLTH…GMLD. The 52-residue stretch at 232 to 283 folds into the LRRCT 1 domain; sequence NPWNCTCEIVQLKSWLERIPYTALVGDITCETPFHFHGKDLREIRKTELCPL. A disordered region spans residues 325-360; the sequence is EYKSSNKQPKPTKQPRTPRPPSTSQALYPGPNQPPI. The 43-residue stretch at 364 to 406 folds into the LRRNT domain; sequence QTRPPIPIICPTGCTCNLHINDLGLTVNCKERGFNNISELLPR. LRR repeat units lie at residues 409 to 430, 433 to 454, 457 to 478, 481 to 502, 505 to 526, and 528 to 549; these read NAKK…DFWN, SLDL…AFIN, NLKS…MFRG, SLHY…AFSL, NLKL…AFAG, and SLAR…GVLE. An LRRCT 2 domain is found at 562–613; it reads NPWDCTCDLVPFKQWIETISSVSVVGDVLCRSPENLTHRDVRTIELEVLCPE. N-linked (GlcNAc...) asparagine glycosylation occurs at N596. A helical transmembrane segment spans residues 655–675; that stretch reads VLILSLLVLFFSAVFVAAGLF. Over 676 to 977 the chain is Cytoplasmic; sequence AYVLRRRRKK…EVLEKTTYRF (302 aa). Disordered regions lie at residues 708–735 and 761–790; these read LFED…KAPP and EEEV…MGEA. A compositionally biased stretch (gly residues) spans 711–724; the sequence is DGGGGGGGSGGGGR. Over residues 765–775 the composition is skewed to low complexity; sequence AVSSAQEAGSA.

It belongs to the SLITRK family. As to expression, expressed in the occipital lobe of the cerebral cortex of the brain. Expressed at higher levels in some astrocytic brain tumors such as astrocytomas, oligodendrogliomas, glioblastomas, gangliogliomas and primitive neuroectodermal tumors.

The protein localises to the membrane. Suppresses neurite outgrowth. The sequence is that of SLIT and NTRK-like protein 3 (SLITRK3) from Homo sapiens (Human).